The sequence spans 81 residues: Photosystem I iron-sulfur center (81 aa).

4Fe-4S ferredoxin-type domains lie at 2-31 (SHAV…MVPW) and 39-68 (IASS…IRVY). Cysteine 11, cysteine 14, cysteine 17, cysteine 21, cysteine 48, cysteine 51, cysteine 54, and cysteine 58 together coordinate [4Fe-4S] cluster.

As to quaternary structure, the cyanobacterial PSI reaction center is composed of one copy each of PsaA,B,C,D,E,F,I,J,K,L,M and X, and forms trimeric complexes. The cofactor is [4Fe-4S] cluster.

Its subcellular location is the cellular thylakoid membrane. It catalyses the reaction reduced [plastocyanin] + hnu + oxidized [2Fe-2S]-[ferredoxin] = oxidized [plastocyanin] + reduced [2Fe-2S]-[ferredoxin]. Its function is as follows. Apoprotein for the two 4Fe-4S centers FA and FB of photosystem I (PSI); essential for photochemical activity. FB is the terminal electron acceptor of PSI, donating electrons to ferredoxin. The C-terminus interacts with PsaA/B/D and helps assemble the protein into the PSI complex. Required for binding of PsaD and PsaE to PSI. PSI is a plastocyanin/cytochrome c6-ferredoxin oxidoreductase, converting photonic excitation into a charge separation, which transfers an electron from the donor P700 chlorophyll pair to the spectroscopically characterized acceptors A0, A1, FX, FA and FB in turn. This Prochlorococcus marinus (strain NATL2A) protein is Photosystem I iron-sulfur center.